The chain runs to 312 residues: Glyoxylate/hydroxypyruvate reductase A (312 aa).

Arg-227 is an active-site residue. Catalysis depends on His-275, which acts as the Proton donor.

Belongs to the D-isomer specific 2-hydroxyacid dehydrogenase family. GhrA subfamily.

The protein resides in the cytoplasm. It catalyses the reaction glycolate + NADP(+) = glyoxylate + NADPH + H(+). The catalysed reaction is (R)-glycerate + NAD(+) = 3-hydroxypyruvate + NADH + H(+). The enzyme catalyses (R)-glycerate + NADP(+) = 3-hydroxypyruvate + NADPH + H(+). In terms of biological role, catalyzes the NADPH-dependent reduction of glyoxylate and hydroxypyruvate into glycolate and glycerate, respectively. The chain is Glyoxylate/hydroxypyruvate reductase A from Escherichia coli O6:K15:H31 (strain 536 / UPEC).